The following is a 380-amino-acid chain: SAM and SH3 domain-containing protein 3 (380 aa).

Disordered stretches follow at residues 1–76 (MLRR…GKKW) and 96–168 (LSEE…SPAP). Over residues 22-41 (LQRSSSFKDFAKSKPSSPVV) the composition is skewed to low complexity. Residues S27, S34, and S42 each carry the phosphoserine modification. T61 is modified (phosphothreonine). S97 is subject to Phosphoserine. T103 carries the phosphothreonine modification. S110 is subject to Phosphoserine. Position 112 is a phosphothreonine (T112). Phosphoserine occurs at positions 113 and 120. Polar residues predominate over residues 141-150 (LSRQTSTGSE). Residues 173 to 234 (PFCGRARVHT…KFIYVDVLPE (62 aa)) form the SH3 domain. Residues 252-316 (PKPKTLHELL…LTAAELLLDY (65 aa)) enclose the SAM domain. A Phosphothreonine modification is found at T318. The segment covering 318-327 (TGSEEAEEGA) has biased composition (acidic residues). Positions 318–380 (TGSEEAEEGA…LQGLSLSGAP (63 aa)) are disordered. Residue S320 is modified to Phosphoserine. A compositionally biased stretch (polar residues) spans 369 to 380 (EQLQGLSLSGAP).

In terms of tissue distribution, preferentially expressed in lymphoid tissues. Expressed in bone marrow, thymus, spleen, lymph nodes and Peyer patches of gut. In the spleen and lymph nodes, expressed in both T- and B-cells. In the thymus, in the medulla and cortex.

In terms of biological role, may function as a signaling adapter protein in lymphocytes. The chain is SAM and SH3 domain-containing protein 3 (Sash3) from Mus musculus (Mouse).